A 132-amino-acid chain; its full sequence is UPF0299 membrane protein YohJ (132 aa).

4 helical membrane passes run 7–27 (IIWQ…AGIF), 31–51 (LLPV…VLLA), 63–83 (GCYV…VGVM), and 93–113 (FGPV…VVSW).

Belongs to the UPF0299 family.

It is found in the cell inner membrane. The sequence is that of UPF0299 membrane protein YohJ from Shigella boydii serotype 4 (strain Sb227).